Consider the following 755-residue polypeptide: Thermostable beta-glucosidase B (755 aa).

Aspartate 231 is a catalytic residue.

This sequence belongs to the glycosyl hydrolase 3 family.

The enzyme catalyses Hydrolysis of terminal, non-reducing beta-D-glucosyl residues with release of beta-D-glucose.. It functions in the pathway glycan metabolism; cellulose degradation. The polypeptide is Thermostable beta-glucosidase B (bglB) (Acetivibrio thermocellus (strain ATCC 27405 / DSM 1237 / JCM 9322 / NBRC 103400 / NCIMB 10682 / NRRL B-4536 / VPI 7372) (Clostridium thermocellum)).